The sequence spans 167 residues: Phosphopantetheine adenylyltransferase (167 aa).

Serine 11 is a binding site for substrate. Residues 11 to 12 (SF) and histidine 19 contribute to the ATP site. 3 residues coordinate substrate: lysine 43, threonine 76, and arginine 90. ATP-binding positions include 91–93 (GIR), glutamate 101, and 126–132 (YDALSST).

The protein belongs to the bacterial CoaD family. In terms of assembly, homohexamer. Requires Mg(2+) as cofactor.

The protein localises to the cytoplasm. The catalysed reaction is (R)-4'-phosphopantetheine + ATP + H(+) = 3'-dephospho-CoA + diphosphate. It participates in cofactor biosynthesis; coenzyme A biosynthesis; CoA from (R)-pantothenate: step 4/5. Functionally, reversibly transfers an adenylyl group from ATP to 4'-phosphopantetheine, yielding dephospho-CoA (dPCoA) and pyrophosphate. The sequence is that of Phosphopantetheine adenylyltransferase from Lacticaseibacillus casei (strain BL23) (Lactobacillus casei).